A 544-amino-acid polypeptide reads, in one-letter code: Probable protein kinase UbiB (544 aa).

In terms of domain architecture, Protein kinase spans 123 to 501; sequence DFDIKPLASA…KRQQGTGKFL (379 aa). ATP-binding positions include 129 to 137 and lysine 152; that span reads LASASIAQV. The active-site Proton acceptor is the aspartate 287. 2 helical membrane passes run 496 to 516 and 519 to 539; these read GTGK…AIWI and QLEP…LLSW.

Belongs to the ABC1 family. UbiB subfamily.

It is found in the cell inner membrane. The protein operates within cofactor biosynthesis; ubiquinone biosynthesis [regulation]. Its function is as follows. Is probably a protein kinase regulator of UbiI activity which is involved in aerobic coenzyme Q (ubiquinone) biosynthesis. In Vibrio cholerae serotype O1 (strain ATCC 39315 / El Tor Inaba N16961), this protein is Probable protein kinase UbiB.